Here is a 79-residue protein sequence, read N- to C-terminus: Acyl carrier protein (79 aa).

Positions Ser2 to Ala77 constitute a Carrier domain. Position 37 is an O-(pantetheine 4'-phosphoryl)serine (Ser37).

Belongs to the acyl carrier protein (ACP) family. Post-translationally, 4'-phosphopantetheine is transferred from CoA to a specific serine of apo-ACP by AcpS. This modification is essential for activity because fatty acids are bound in thioester linkage to the sulfhydryl of the prosthetic group.

The protein resides in the cytoplasm. It participates in lipid metabolism; fatty acid biosynthesis. Its function is as follows. Carrier of the growing fatty acid chain in fatty acid biosynthesis. The polypeptide is Acyl carrier protein (Methylibium petroleiphilum (strain ATCC BAA-1232 / LMG 22953 / PM1)).